Reading from the N-terminus, the 131-residue chain is Hydrophilin PGA14 (131 aa).

A signal peptide spans 1 to 18 (MKFTTVATVFAISSLAAA). Basic and acidic residues-rich tracts occupy residues 42-59 (YGRF…ETGT) and 79-96 (KESD…RDSK). The segment at 42-110 (YGRFDKTSRS…NSTTSSGNNG (69 aa)) is disordered. 2 N-linked (GlcNAc...) asparagine glycosylation sites follow: asparagine 97 and asparagine 101. Over residues 97 to 110 (NASSNSTTSSGNNG) the composition is skewed to low complexity. Serine 105 is lipidated: GPI-anchor amidated serine. Residues 106–131 (SGNNGVATGVSLGLAGVLAVGAALVI) constitute a propeptide, removed in mature form.

This sequence belongs to the PGA14 family. The GPI-anchor is attached to the protein in the endoplasmic reticulum and serves to target the protein to the cell surface. There, the glucosamine-inositol phospholipid moiety is cleaved off and the GPI-modified mannoprotein is covalently attached via its lipidless GPI glycan remnant to the 1,6-beta-glucan of the outer cell wall layer.

The protein localises to the secreted. It is found in the cell wall. The protein resides in the membrane. Its function is as follows. Hydrophilin which is essential to overcome the simple stress of the desiccation-rehydration process. The sequence is that of Hydrophilin PGA14 (PGA14) from Candida albicans (strain SC5314 / ATCC MYA-2876) (Yeast).